The chain runs to 341 residues: Spore photoproduct lyase (341 aa).

A Radical SAM core domain is found at 76 to 304 (SKPSAEYAIP…ESKRKYKWGR (229 aa)). Residues Cys-90, Cys-94, and Cys-97 each coordinate [4Fe-4S] cluster. Residues 217–234 (QAARKVAGAGYKLGFVVA) constitute a DNA-binding region (H-T-H motif).

This sequence belongs to the radical SAM superfamily. SPL family. In terms of assembly, monomer or homodimer. It depends on [4Fe-4S] cluster as a cofactor. The cofactor is S-adenosyl-L-methionine.

It carries out the reaction (5R)-5,6-dihydro-5-(thymidin-7-yl)thymidine in DNA = a thymidine dimer in DNA. Its function is as follows. Involved in repair of UV radiation-induced DNA damage during spore germination. Can repair thymine dimer 5-thyminyl-5,6-dihydrothymine (known as spore photoproduct (SP)) by in situ monomerization of SP to two thymines. The protein is Spore photoproduct lyase (splG) of Geobacillus sp. (strain Y412MC61).